The following is a 176-amino-acid chain: Inorganic pyrophosphatase (176 aa).

Residues Lys-30, Arg-44, and Tyr-56 each contribute to the substrate site. Residues Asp-66, Asp-71, and Asp-103 each coordinate Mg(2+). Residue Tyr-142 participates in substrate binding.

It belongs to the PPase family. Homohexamer. Requires Mg(2+) as cofactor.

The protein localises to the cytoplasm. It carries out the reaction diphosphate + H2O = 2 phosphate + H(+). In terms of biological role, catalyzes the hydrolysis of inorganic pyrophosphate (PPi) forming two phosphate ions. This chain is Inorganic pyrophosphatase, found in Salmonella typhi.